A 98-amino-acid chain; its full sequence is Defensin-B (98 aa).

The first 20 residues, 1 to 20, serve as a signal peptide directing secretion; it reads MKSITVICFLALCTVAITSA. The propeptide occupies 21–58; sequence YPQEPVLADEARPFANSLFDELPEETYQAAVENFRLKR. 3 disulfides stabilise this stretch: cysteine 61-cysteine 88, cysteine 74-cysteine 94, and cysteine 78-cysteine 96.

The protein belongs to the invertebrate defensin family. Type 1 subfamily.

The protein localises to the secreted. Functionally, antibacterial peptide mostly active against Gram-positive bacteria. The chain is Defensin-B (DEFB) from Aedes aegypti (Yellowfever mosquito).